The primary structure comprises 67 residues: Protein AaeX (67 aa).

2 helical membrane passes run 10–30 and 43–63; these read FGLS…LFFV and FVWH…YLLF.

This sequence belongs to the AaeX family.

Its subcellular location is the cell membrane. This chain is Protein AaeX, found in Pectobacterium carotovorum subsp. carotovorum (strain PC1).